The sequence spans 450 residues: Phosphoglucosamine mutase (450 aa).

The active-site Phosphoserine intermediate is S102. Residues S102, D243, D245, and D247 each contribute to the Mg(2+) site. S102 is modified (phosphoserine).

This sequence belongs to the phosphohexose mutase family. Mg(2+) is required as a cofactor. In terms of processing, activated by phosphorylation.

The catalysed reaction is alpha-D-glucosamine 1-phosphate = D-glucosamine 6-phosphate. Catalyzes the conversion of glucosamine-6-phosphate to glucosamine-1-phosphate. The sequence is that of Phosphoglucosamine mutase from Rhizobium johnstonii (strain DSM 114642 / LMG 32736 / 3841) (Rhizobium leguminosarum bv. viciae).